We begin with the raw amino-acid sequence, 296 residues long: N-acetylmuramic acid 6-phosphate etherase (296 aa).

Residues 54 to 217 (VIASFQQGGR…STTAMVGIGK (164 aa)) form the SIS domain. Glu-82 serves as the catalytic Proton donor. The active site involves Glu-113.

This sequence belongs to the GCKR-like family. MurNAc-6-P etherase subfamily. As to quaternary structure, homodimer.

The catalysed reaction is N-acetyl-D-muramate 6-phosphate + H2O = N-acetyl-D-glucosamine 6-phosphate + (R)-lactate. Its pathway is amino-sugar metabolism; N-acetylmuramate degradation. Functionally, specifically catalyzes the cleavage of the D-lactyl ether substituent of MurNAc 6-phosphate, producing GlcNAc 6-phosphate and D-lactate. The sequence is that of N-acetylmuramic acid 6-phosphate etherase from Shouchella clausii (strain KSM-K16) (Alkalihalobacillus clausii).